We begin with the raw amino-acid sequence, 261 residues long: Type III pantothenate kinase (261 aa).

6-13 provides a ligand contact to ATP; sequence DVGNTNAK. 108–111 contacts substrate; sequence GADR. The active-site Proton acceptor is Asp110. Thr134 is a binding site for ATP. Thr188 is a binding site for substrate.

The protein belongs to the type III pantothenate kinase family. In terms of assembly, homodimer. Requires NH4(+) as cofactor. The cofactor is K(+).

It is found in the cytoplasm. The enzyme catalyses (R)-pantothenate + ATP = (R)-4'-phosphopantothenate + ADP + H(+). Its pathway is cofactor biosynthesis; coenzyme A biosynthesis; CoA from (R)-pantothenate: step 1/5. Functionally, catalyzes the phosphorylation of pantothenate (Pan), the first step in CoA biosynthesis. The polypeptide is Type III pantothenate kinase (Sphingopyxis alaskensis (strain DSM 13593 / LMG 18877 / RB2256) (Sphingomonas alaskensis)).